The chain runs to 367 residues: MSVFTNSYIPVNKYTRPGLKLQGVKKCVLHYTANPGAGADNHRRYFSNAQVYASAHIFVDKAEAICIIPLNEVAYHANDIQQRDSAGNPYRGVAALKPNANFLSIGVEMCLEKDGSFHSDTVERTEDVFVELCNKFGLDPIDDIVRHYDITHKNCPAPWVSNSQKFVDFKNRVKAKMSGKSVSKASPTKPTTSSPSSSSAVSGSLKSKVDGLRFYSKPSWEDKDVVGTVNKGIGFPTVVEKVKVGSAYQYKVKNSKGTTYYITASDKYVDVTGSVKTSSSAPKTTSTSSSSSSIKSVGKIKIVGVSSAAIVMDKPDRNSSKNIGTVKLGSTISISGSVKGKNNSNGYWEVIYKGKRGYISGQFGSTI.

The N-acetylmuramoyl-L-alanine amidase domain occupies 24–158 (VKKCVLHYTA…DITHKNCPAP (135 aa)). The disordered stretch occupies residues 178–204 (SGKSVSKASPTKPTTSSPSSSSAVSGS). Residues 180 to 204 (KSVSKASPTKPTTSSPSSSSAVSGS) are compositionally biased toward low complexity. 2 consecutive SH3b domains span residues 202-271 (SGSL…YVDV) and 298-367 (GKIK…GSTI).

This sequence belongs to the N-acetylmuramoyl-L-alanine amidase 2 family.

Its subcellular location is the secreted. It catalyses the reaction Hydrolyzes the link between N-acetylmuramoyl residues and L-amino acid residues in certain cell-wall glycopeptides.. In terms of biological role, autolysins are involved in some important biological processes such as cell separation, cell-wall turnover, competence for genetic transformation, formation of the flagella and sporulation. Involved in prophage SP-beta-mediated cell lysis. This chain is N-acetylmuramoyl-L-alanine amidase BlyA (blyA), found in Bacillus subtilis (strain 168).